The chain runs to 365 residues: uncharacterized protein (365 aa).

Residues 18 to 46 adopt a coiled-coil conformation; that stretch reads TAQEALTLIEKLDSDYKEKEEKITALSVH.

This is an uncharacterized protein from Bacillus subtilis (strain 168).